A 728-amino-acid polypeptide reads, in one-letter code: 1,4-alpha-glucan branching enzyme GlgB (728 aa).

Aspartate 405 functions as the Nucleophile in the catalytic mechanism. The active-site Proton donor is the glutamate 458.

Belongs to the glycosyl hydrolase 13 family. GlgB subfamily. Monomer.

It catalyses the reaction Transfers a segment of a (1-&gt;4)-alpha-D-glucan chain to a primary hydroxy group in a similar glucan chain.. Its pathway is glycan biosynthesis; glycogen biosynthesis. Catalyzes the formation of the alpha-1,6-glucosidic linkages in glycogen by scission of a 1,4-alpha-linked oligosaccharide from growing alpha-1,4-glucan chains and the subsequent attachment of the oligosaccharide to the alpha-1,6 position. The polypeptide is 1,4-alpha-glucan branching enzyme GlgB (Escherichia coli O6:H1 (strain CFT073 / ATCC 700928 / UPEC)).